The following is a 142-amino-acid chain: Large ribosomal subunit protein uL11 (142 aa).

It belongs to the universal ribosomal protein uL11 family. In terms of assembly, part of the ribosomal stalk of the 50S ribosomal subunit. Interacts with L10 and the large rRNA to form the base of the stalk. L10 forms an elongated spine to which L12 dimers bind in a sequential fashion forming a multimeric L10(L12)X complex. One or more lysine residues are methylated.

Forms part of the ribosomal stalk which helps the ribosome interact with GTP-bound translation factors. This Brucella anthropi (strain ATCC 49188 / DSM 6882 / CCUG 24695 / JCM 21032 / LMG 3331 / NBRC 15819 / NCTC 12168 / Alc 37) (Ochrobactrum anthropi) protein is Large ribosomal subunit protein uL11.